Reading from the N-terminus, the 239-residue chain is Ribitol-5-phosphate cytidylyltransferase (239 aa).

CTP-binding positions include 7 to 10 (FAGG) and 80 to 86 (GETGQMS).

This sequence belongs to the IspD/TarI cytidylyltransferase family. TarI subfamily.

It carries out the reaction D-ribitol 5-phosphate + CTP + H(+) = CDP-L-ribitol + diphosphate. Its pathway is cell wall biogenesis; poly(ribitol phosphate) teichoic acid biosynthesis. Its function is as follows. Catalyzes the transfer of the cytidylyl group of CTP to D-ribitol 5-phosphate. This is Ribitol-5-phosphate cytidylyltransferase from Streptococcus agalactiae serotype III (strain NEM316).